The sequence spans 1041 residues: DNA polymerase catalytic subunit (1041 aa).

Residues 1 to 23 are disordered; the sequence is MAFFNPYFKSKNKGSDMPPKQSM.

It belongs to the DNA polymerase type-B family.

It localises to the host nucleus. The enzyme catalyses DNA(n) + a 2'-deoxyribonucleoside 5'-triphosphate = DNA(n+1) + diphosphate. It carries out the reaction Endonucleolytic cleavage to 5'-phosphomonoester.. Its function is as follows. Replicates viral genomic DNA. The replication complex is composed of six viral proteins: the DNA polymerase, processivity factor, primase, primase-associated factor, helicase, and ssDNA-binding protein. Additionally, the polymerase contains an intrinsic ribonuclease H (RNase H) activity that specifically degrades RNA/DNA heteroduplexes or duplex DNA substrates in the 5' to 3' direction. Therefore, it can catalyze the excision of the RNA primers that initiate the synthesis of Okazaki fragments at a replication fork during viral DNA replication. In Elephantid herpesvirus 1 (isolate Asian elephant/Berlin/Kiba/1998) (EIHV-1), this protein is DNA polymerase catalytic subunit.